A 446-amino-acid chain; its full sequence is N-succinylarginine dihydrolase (446 aa).

Residues 19–28 (AGLSFGNEAS), Asn110, and 137–138 (HR) contribute to the substrate site. Glu174 is an active-site residue. Substrate is bound at residue Arg213. His249 is an active-site residue. Substrate is bound by residues Asp251 and Asn364. Cys370 acts as the Nucleophile in catalysis.

This sequence belongs to the succinylarginine dihydrolase family. In terms of assembly, homodimer.

It carries out the reaction N(2)-succinyl-L-arginine + 2 H2O + 2 H(+) = N(2)-succinyl-L-ornithine + 2 NH4(+) + CO2. The protein operates within amino-acid degradation; L-arginine degradation via AST pathway; L-glutamate and succinate from L-arginine: step 2/5. Catalyzes the hydrolysis of N(2)-succinylarginine into N(2)-succinylornithine, ammonia and CO(2). This chain is N-succinylarginine dihydrolase, found in Serratia proteamaculans (strain 568).